Here is a 223-residue protein sequence, read N- to C-terminus: Type 3 secretion system stator protein (223 aa).

It belongs to the SctL stator family. As to quaternary structure, the core secretion machinery of the T3SS is composed of approximately 20 different proteins, including cytoplasmic components, a base, an export apparatus and a needle. This subunit is part of the cytosolic complex. Interacts directly with YscN/SctN (T3SS ATPase) and YscQ/SctQ (the major sorting platform component). Forms homodimers.

It is found in the cytoplasm. Component of the type III secretion system (T3SS), also called injectisome, which is used to inject bacterial effector proteins into eukaryotic host cells. Acts as a regulator of the YscN/SctN ATPase activity. Overexpression of YscL/SctL abolishes type III secretion and down-regulates the expression of secretion apparatus components. This chain is Type 3 secretion system stator protein, found in Yersinia enterocolitica.